The following is a 96-amino-acid chain: Large ribosomal subunit protein uL23 (96 aa).

It belongs to the universal ribosomal protein uL23 family. In terms of assembly, part of the 50S ribosomal subunit. Contacts protein L29, and trigger factor when it is bound to the ribosome.

Functionally, one of the early assembly proteins it binds 23S rRNA. One of the proteins that surrounds the polypeptide exit tunnel on the outside of the ribosome. Forms the main docking site for trigger factor binding to the ribosome. In Solidesulfovibrio magneticus (strain ATCC 700980 / DSM 13731 / RS-1) (Desulfovibrio magneticus), this protein is Large ribosomal subunit protein uL23.